A 102-amino-acid polypeptide reads, in one-letter code: Small ribosomal subunit protein uS10 (102 aa).

This sequence belongs to the universal ribosomal protein uS10 family. As to quaternary structure, part of the 30S ribosomal subunit.

Its function is as follows. Involved in the binding of tRNA to the ribosomes. This chain is Small ribosomal subunit protein uS10, found in Micrococcus luteus (strain ATCC 4698 / DSM 20030 / JCM 1464 / CCM 169 / CCUG 5858 / IAM 1056 / NBRC 3333 / NCIMB 9278 / NCTC 2665 / VKM Ac-2230) (Micrococcus lysodeikticus).